Here is a 454-residue protein sequence, read N- to C-terminus: uncharacterized protein (454 aa).

In terms of domain architecture, HNH spans 364-405 (CSRPGCDAPAYHSEVHHVTPWTTTHRTDINDLTLACGPDNRL).

This sequence belongs to the Rv1128c/1148c/1588c/1702c/1945/3466 family.

This is an uncharacterized protein from Mycobacterium tuberculosis (strain CDC 1551 / Oshkosh).